The chain runs to 210 residues: uncharacterized protein (210 aa).

The first 21 residues, 1–21, serve as a signal peptide directing secretion; it reads MLKMNVKKALVILVALALVAA.

This is an uncharacterized protein from Archaeoglobus fulgidus (strain ATCC 49558 / DSM 4304 / JCM 9628 / NBRC 100126 / VC-16).